Reading from the N-terminus, the 344-residue chain is Arginine N-succinyltransferase (344 aa).

Leucine 125 is a succinyl-CoA binding site. Histidine 229 functions as the Proton donor in the catalytic mechanism.

The protein belongs to the arginine N-succinyltransferase family.

It carries out the reaction succinyl-CoA + L-arginine = N(2)-succinyl-L-arginine + CoA + H(+). It functions in the pathway amino-acid degradation; L-arginine degradation via AST pathway; L-glutamate and succinate from L-arginine: step 1/5. Catalyzes the transfer of succinyl-CoA to arginine to produce N(2)-succinylarginine. The sequence is that of Arginine N-succinyltransferase from Salmonella dublin (strain CT_02021853).